The following is a 373-amino-acid chain: Transaldolase (373 aa).

Lys-143 (schiff-base intermediate with substrate) is an active-site residue.

The protein belongs to the transaldolase family. Type 2 subfamily.

The protein resides in the cytoplasm. The enzyme catalyses D-sedoheptulose 7-phosphate + D-glyceraldehyde 3-phosphate = D-erythrose 4-phosphate + beta-D-fructose 6-phosphate. It functions in the pathway carbohydrate degradation; pentose phosphate pathway; D-glyceraldehyde 3-phosphate and beta-D-fructose 6-phosphate from D-ribose 5-phosphate and D-xylulose 5-phosphate (non-oxidative stage): step 2/3. Its function is as follows. Transaldolase is important for the balance of metabolites in the pentose-phosphate pathway. In Mycolicibacterium paratuberculosis (strain ATCC BAA-968 / K-10) (Mycobacterium paratuberculosis), this protein is Transaldolase.